A 180-amino-acid polypeptide reads, in one-letter code: Oligoribonuclease (180 aa).

The 164-residue stretch at 7–170 (LIWIDLEMTG…SDIQDSIDEL (164 aa)) folds into the Exonuclease domain. Residue Tyr-128 is part of the active site.

The protein belongs to the oligoribonuclease family.

The protein resides in the cytoplasm. 3'-to-5' exoribonuclease specific for small oligoribonucleotides. The chain is Oligoribonuclease from Ruthia magnifica subsp. Calyptogena magnifica.